The following is a 606-amino-acid chain: V-type proton ATPase catalytic subunit A (606 aa).

The residue at position 2 (A2) is an N-acetylalanine. Position 240–247 (240–247) interacts with ATP; sequence AFGCGKTV.

This sequence belongs to the ATPase alpha/beta chains family. V-ATPase is a heteromultimeric enzyme made up of two complexes: the ATP-hydrolytic V1 complex and the proton translocation V0 complex. The V1 complex consists of three catalytic AB heterodimers that form a heterohexamer, three peripheral stalks each consisting of EG heterodimers, one central rotor including subunits D and F, and the regulatory subunits C and H. The proton translocation complex V0 consists of the proton transport subunit a, a ring of proteolipid subunits c9c'', rotary subunit d, subunits e and f, and the accessory subunits vah-19/Ac45 and vah-20/PRR. In terms of tissue distribution, expressed in proximal but not distal germ cells.

The catalysed reaction is ATP + H2O + 4 H(+)(in) = ADP + phosphate + 5 H(+)(out). With respect to regulation, ATP hydrolysis occurs at the interface between the nucleotide-binding domains of subunits A and B. ATP hydrolysis triggers a conformational change in the subunits D and F, which induces a shift of subunit d. The c-ring is subsequently rotated and results in a continuous proton translocation across the membrane. Catalytic subunit of the V1 complex of vacuolar(H+)-ATPase (V-ATPase), a multisubunit enzyme composed of a peripheral complex (V1) that hydrolyzes ATP and a membrane integral complex (V0) that translocates protons. V-ATPase is responsible for acidifying and maintaining the pH of intracellular compartments and in some cell types, is targeted to the plasma membrane, where it is responsible for acidifying the extracellular environment. Required along with other vacuolar ATPase components for the removal of protein aggregates which form in immature oocytes in the distal gonad. This removal occurs as the oocytes mature and move to the proximal gonad, is triggered by the introduction of sperm through mating and occurs before fertilization. The introduction of sperm triggers V-ATPase accumulation in proximal oocytes and induces lysosomal acidification which leads to engulfing of protein aggregates by lysosomes and subsequent clearance of the aggregates. Lysosomal acidification also leads to changes in mitochondrial morphology and function. Mitochondria in distal immature oocytes are fragmented, produce high levels of reactive oxygen species (ROS) and have high membrane potential, indicative of metabolic inactivity. In contrast, mitochondria in proximal mature oocytes are tubular with lower ROS levels and membrane potential, indicative of an active metabolic state required for aggregate mobilization before clearance. Involved in receptor-mediated endocytosis. This Caenorhabditis elegans protein is V-type proton ATPase catalytic subunit A.